The chain runs to 87 residues: Small ribosomal subunit protein uS15 (87 aa).

It belongs to the universal ribosomal protein uS15 family. Part of the 30S ribosomal subunit. Forms a bridge to the 50S subunit in the 70S ribosome, contacting the 23S rRNA.

In terms of biological role, one of the primary rRNA binding proteins, it binds directly to 16S rRNA where it helps nucleate assembly of the platform of the 30S subunit by binding and bridging several RNA helices of the 16S rRNA. Its function is as follows. Forms an intersubunit bridge (bridge B4) with the 23S rRNA of the 50S subunit in the ribosome. The sequence is that of Small ribosomal subunit protein uS15 from Clostridium kluyveri (strain NBRC 12016).